We begin with the raw amino-acid sequence, 192 residues long: Ion-translocating oxidoreductase complex subunit A (192 aa).

The next 6 helical transmembrane spans lie at 5 to 25, 39 to 59, 65 to 85, 102 to 122, 134 to 154, and 171 to 191; these read LLLLISTVLVNNFVLVKFLGL, IGMSMATTFVLTLASILSYLV, LPFDLSYLRTMSFILVIAVVV, ALGIYLPLITTNCAVLGVALL, AIYGFGAAVGFSLVLILFSAM, and AIAMITAGLMSLAFMGFTGLV.

This sequence belongs to the NqrDE/RnfAE family. In terms of assembly, the complex is composed of six subunits: RnfA, RnfB, RnfC, RnfD, RnfE and RnfG.

It is found in the cell inner membrane. In terms of biological role, part of a membrane-bound complex that couples electron transfer with translocation of ions across the membrane. The chain is Ion-translocating oxidoreductase complex subunit A from Shewanella putrefaciens (strain CN-32 / ATCC BAA-453).